A 179-amino-acid polypeptide reads, in one-letter code: Orotate phosphoribosyltransferase (179 aa).

5-phospho-alpha-D-ribose 1-diphosphate-binding positions include arginine 94, lysine 95, lysine 98, histidine 100, and 120–128 (EDTSTTGNS). Orotate contacts are provided by threonine 124 and arginine 152.

This sequence belongs to the purine/pyrimidine phosphoribosyltransferase family. PyrE subfamily. As to quaternary structure, homodimer. It depends on Mg(2+) as a cofactor.

The enzyme catalyses orotidine 5'-phosphate + diphosphate = orotate + 5-phospho-alpha-D-ribose 1-diphosphate. Its pathway is pyrimidine metabolism; UMP biosynthesis via de novo pathway; UMP from orotate: step 1/2. Its function is as follows. Catalyzes the transfer of a ribosyl phosphate group from 5-phosphoribose 1-diphosphate to orotate, leading to the formation of orotidine monophosphate (OMP). This Mycobacterium avium (strain 104) protein is Orotate phosphoribosyltransferase.